Here is a 188-residue protein sequence, read N- to C-terminus: ATP synthase subunit delta (188 aa).

It belongs to the ATPase delta chain family. F-type ATPases have 2 components, F(1) - the catalytic core - and F(0) - the membrane proton channel. F(1) has five subunits: alpha(3), beta(3), gamma(1), delta(1), epsilon(1). F(0) has three main subunits: a(1), b(2) and c(10-14). The alpha and beta chains form an alternating ring which encloses part of the gamma chain. F(1) is attached to F(0) by a central stalk formed by the gamma and epsilon chains, while a peripheral stalk is formed by the delta and b chains.

It is found in the cell membrane. F(1)F(0) ATP synthase produces ATP from ADP in the presence of a proton or sodium gradient. F-type ATPases consist of two structural domains, F(1) containing the extramembraneous catalytic core and F(0) containing the membrane proton channel, linked together by a central stalk and a peripheral stalk. During catalysis, ATP synthesis in the catalytic domain of F(1) is coupled via a rotary mechanism of the central stalk subunits to proton translocation. Its function is as follows. This protein is part of the stalk that links CF(0) to CF(1). It either transmits conformational changes from CF(0) to CF(1) or is implicated in proton conduction. This Malacoplasma penetrans (strain HF-2) (Mycoplasma penetrans) protein is ATP synthase subunit delta.